A 349-amino-acid polypeptide reads, in one-letter code: MSKETLILLYGGRSAEREVSVLSAESVMRAVNYSRFIVKTYFITKGGEFIKTQEFTDRPAEEEKLLTNDLAESYPKISPAAIYEKDAVVFPVLHGPMGEDGSIQGFLEILRLAYVGPNILSASSTMDKLLAKHVFEAVGVPQVPYVAAFADENQVEIAQEVVEKLDFPVFVKPANMGSSVGISKVDDLADLQPALSEAYKYDNRVVIEQGVDAREIECAVLGNNSDVSATLPGEVVKDVGFYDYNSKYIDNKIQMDIPAKVSADLAQKIQEYAKKAYKAVNGAGLSRCDFFVTKDGNVYLNEVNAIPGFTQWSMYPLLWENMGLSYSDLIEKLVDLAKETFETRENHLL.

The 204-residue stretch at K132–D335 folds into the ATP-grasp domain. V162 to E217 serves as a coordination point for ATP. D289, E302, and N304 together coordinate Mg(2+).

The protein belongs to the D-alanine--D-alanine ligase family. The cofactor is Mg(2+). Requires Mn(2+) as cofactor.

The protein localises to the cytoplasm. The enzyme catalyses 2 D-alanine + ATP = D-alanyl-D-alanine + ADP + phosphate + H(+). The protein operates within cell wall biogenesis; peptidoglycan biosynthesis. Functionally, cell wall formation. This chain is D-alanine--D-alanine ligase, found in Lactococcus lactis subsp. cremoris (strain MG1363).